The primary structure comprises 244 residues: Small ribosomal subunit protein uS3 (244 aa).

One can recognise a KH type-2 domain in the interval 38–106 (IRKYLNARLA…EVQINIFEVK (69 aa)). The segment covering 222-235 (TGRRNDNAGGNRDK) has biased composition (basic and acidic residues). The segment at 222-244 (TGRRNDNAGGNRDKNFKRKRANR) is disordered.

The protein belongs to the universal ribosomal protein uS3 family. Part of the 30S ribosomal subunit. Forms a tight complex with proteins S10 and S14.

In terms of biological role, binds the lower part of the 30S subunit head. Binds mRNA in the 70S ribosome, positioning it for translation. In Parabacteroides distasonis (strain ATCC 8503 / DSM 20701 / CIP 104284 / JCM 5825 / NCTC 11152), this protein is Small ribosomal subunit protein uS3.